Here is a 411-residue protein sequence, read N- to C-terminus: Arginine deiminase 1 (411 aa).

Catalysis depends on Cys-401, which acts as the Amidino-cysteine intermediate.

Belongs to the arginine deiminase family.

It is found in the cytoplasm. The enzyme catalyses L-arginine + H2O = L-citrulline + NH4(+). It functions in the pathway amino-acid degradation; L-arginine degradation via ADI pathway; carbamoyl phosphate from L-arginine: step 1/2. The polypeptide is Arginine deiminase 1 (arcA1) (Staphylococcus epidermidis (strain ATCC 12228 / FDA PCI 1200)).